The primary structure comprises 1162 residues: Spike glycoprotein (1162 aa).

The signal sequence occupies residues 1-18 (MLVTPLLLVTLLCALCSA). Residues 19–1095 (ALYDSSSYVY…LKTYIKWPWY (1077 aa)) lie on the Extracellular side of the membrane. N-linked (GlcNAc...) asparagine; by host glycosylation is found at asparagine 51, asparagine 77, asparagine 103, asparagine 144, asparagine 163, asparagine 178, asparagine 212, asparagine 237, asparagine 247, asparagine 264, asparagine 271, asparagine 276, asparagine 306, asparagine 425, asparagine 447, asparagine 513, asparagine 530, asparagine 579, asparagine 591, asparagine 669, asparagine 676, and asparagine 714. The interval 769–874 (IPFATQLQAR…QVDRLITGRL (106 aa)) is heptad repeat 1 (HR1). The stretch at 822 to 866 (QDVVNKQSAILTETMASLNKNFGAISSVIQEIYLQLDAIQANAQV) forms a coiled coil. 7 N-linked (GlcNAc...) asparagine; by host glycosylation sites follow: asparagine 947, asparagine 960, asparagine 979, asparagine 1014, asparagine 1051, asparagine 1058, and asparagine 1074. The tract at residues 1024–1105 (NDDFDFDDEL…VWLAIAFATI (82 aa)) is heptad repeat 2 (HR2). Positions 1055–1083 (PVLNITYDIDKIEEVIKGLNDSLIDLETL) form a coiled coil. The helical transmembrane segment at 1096-1116 (VWLAIAFATIIFILILGWVFF) threads the bilayer. The Cytoplasmic segment spans residues 1117 to 1162 (MTGCCGCCCGCFGIIPLMSKCGKKSSYYTTFDNDVVTEQYRPKKSV). Positions 1159 to 1162 (KKSV) match the Di-lysine motif motif.

The protein belongs to the gammacoronaviruses spike protein family. As to quaternary structure, homotrimer; each monomer consists of a S1 and a S2 subunit. The resulting peplomers protrude from the virus surface as spikes. Specific enzymatic cleavages in vivo yield mature proteins. The precursor is processed into S1 and S2 by host cell furin or furin-like protease to yield the mature S1 and S2 proteins. The cleavage site between S1 and S2 requires the optimal sequence [KR]-X-[KR]-R. Additionally, a second cleavage leads to the release of a fusion peptide after viral attachment to host cell receptor.

Its subcellular location is the virion membrane. The protein resides in the host endoplasmic reticulum-Golgi intermediate compartment membrane. Its function is as follows. Attaches the virion to the host cell membrane by interacting with sialic acids, initiating the infection. In terms of biological role, mediates fusion of the virion and cellular membranes by acting as a class I viral fusion protein. Under the current model, the protein has at least 3 conformational states: pre-fusion native state, pre-hairpin intermediate state, and post-fusion hairpin state. During viral and target cell membrane fusion, the coiled coil regions (heptad repeats) assume a trimer-of-hairpins structure, positioning the fusion peptide in close proximity to the C-terminal region of the ectodomain. The formation of this structure appears to drive apposition and subsequent fusion of viral and target cell membranes. Acts as a viral fusion peptide after S2 cleavage occurring upon virus endocytosis. This Avian infectious bronchitis virus (strain KB8523) (IBV) protein is Spike glycoprotein.